The chain runs to 206 residues: Large ribosomal subunit protein uL22m (206 aa).

The N-terminal 40 residues, 1-40 (MAAALLRELGALWVPNLRIWTTQMLRVLPQSCIHTSTSLD), are a transit peptide targeting the mitochondrion.

The protein belongs to the universal ribosomal protein uL22 family. Component of the mitochondrial ribosome large subunit (39S) which comprises a 16S rRNA and about 50 distinct proteins.

It is found in the mitochondrion. This chain is Large ribosomal subunit protein uL22m (Mrpl22), found in Rattus norvegicus (Rat).